We begin with the raw amino-acid sequence, 664 residues long: DNA mismatch repair protein MutL (664 aa).

Residues 382–447 (RKAGQEQQLQ…YGEPAPSKQQ (66 aa)) are disordered. The span at 427–436 (RHTTSSNQSE) shows a compositional bias: polar residues.

The protein belongs to the DNA mismatch repair MutL/HexB family.

In terms of biological role, this protein is involved in the repair of mismatches in DNA. It is required for dam-dependent methyl-directed DNA mismatch repair. May act as a 'molecular matchmaker', a protein that promotes the formation of a stable complex between two or more DNA-binding proteins in an ATP-dependent manner without itself being part of a final effector complex. The chain is DNA mismatch repair protein MutL from Vibrio vulnificus (strain CMCP6).